The sequence spans 359 residues: Biotin synthase (359 aa).

The Radical SAM core domain occupies H47–R276. Residues C65, C69, and C72 each coordinate [4Fe-4S] cluster. [2Fe-2S] cluster is bound by residues C109, C141, C201, and R271. The interval E320 to G359 is disordered.

It belongs to the radical SAM superfamily. Biotin synthase family. In terms of assembly, homodimer. The cofactor is [4Fe-4S] cluster. Requires [2Fe-2S] cluster as cofactor.

The enzyme catalyses (4R,5S)-dethiobiotin + (sulfur carrier)-SH + 2 reduced [2Fe-2S]-[ferredoxin] + 2 S-adenosyl-L-methionine = (sulfur carrier)-H + biotin + 2 5'-deoxyadenosine + 2 L-methionine + 2 oxidized [2Fe-2S]-[ferredoxin]. It functions in the pathway cofactor biosynthesis; biotin biosynthesis; biotin from 7,8-diaminononanoate: step 2/2. In terms of biological role, catalyzes the conversion of dethiobiotin (DTB) to biotin by the insertion of a sulfur atom into dethiobiotin via a radical-based mechanism. The polypeptide is Biotin synthase (Salinibacter ruber (strain DSM 13855 / M31)).